Reading from the N-terminus, the 179-residue chain is Interleukin-10 (179 aa).

The first 19 residues, 1–19 (MPSPALLCCCLVLLAGVGA), serve as a signal peptide directing secretion. Cystine bridges form between cysteine 31-cysteine 127 and cysteine 81-cysteine 133. Asparagine 135 carries an N-linked (GlcNAc...) asparagine glycan.

This sequence belongs to the IL-10 family. Homodimer. Interacts with IL10RA and IL10RB.

It localises to the secreted. Its function is as follows. Major immune regulatory cytokine that acts on many cells of the immune system where it has profound anti-inflammatory functions, limiting excessive tissue disruption caused by inflammation. Mechanistically, IL10 binds to its heterotetrameric receptor comprising IL10RA and IL10RB leading to JAK1 and STAT2-mediated phosphorylation of STAT3. In turn, STAT3 translocates to the nucleus where it drives expression of anti-inflammatory mediators. Targets antigen-presenting cells (APCs) such as macrophages and monocytes and inhibits their release of pro-inflammatory cytokines including granulocyte-macrophage colony-stimulating factor /GM-CSF, granulocyte colony-stimulating factor/G-CSF, IL-1 alpha, IL-1 beta, IL-6, IL-8 and TNF-alpha. Also interferes with antigen presentation by reducing the expression of MHC-class II and co-stimulatory molecules, thereby inhibiting their ability to induce T cell activation. In addition, controls the inflammatory response of macrophages by reprogramming essential metabolic pathways including mTOR signaling. This is Interleukin-10 (IL10) from Vulpes vulpes (Red fox).